The following is a 117-amino-acid chain: DNA-binding protein DDB_G0278111 (117 aa).

The segment at 1 to 40 (MSSEKEIQQQLSQMQGQGFDPEAQQRQEAQRQEANERRQG) is disordered. A compositionally biased stretch (low complexity) spans 8-22 (QQQLSQMQGQGFDPE). A compositionally biased stretch (basic and acidic residues) spans 23–39 (AQQRQEAQRQEANERRQ).

It belongs to the PDCD5 family.

The chain is DNA-binding protein DDB_G0278111 from Dictyostelium discoideum (Social amoeba).